Reading from the N-terminus, the 506-residue chain is tRNA (guanine(6)-N(2))-methyltransferase THUMP3 (506 aa).

Residues 144-172 (KTKRRKLNPNSSKQKIDNGRGDTTVEKDV) form a disordered region. A compositionally biased stretch (basic and acidic residues) spans 157–172 (QKIDNGRGDTTVEKDV). A THUMP domain is found at 170 to 286 (KDVKKELTNS…DNEVVVGIAL (117 aa)).

Belongs to the methyltransferase superfamily. Part of the heterodimeric THUMPD3-TRM112 methyltransferase complex; this complex forms an active tRNA methyltransferase, where TRMT112 acts as an activator of the catalytic subunit THUMPD3.

The protein resides in the cytoplasm. It catalyses the reaction guanosine(6) in tRNA + S-adenosyl-L-methionine = N(2)-methylguanosine(6) in tRNA + S-adenosyl-L-homocysteine + H(+). The enzyme catalyses guanosine(7) in tRNA + S-adenosyl-L-methionine = N(2)-methylguanosine(7) in tRNA + S-adenosyl-L-homocysteine + H(+). Catalytic subunit of the THUMPD3-TRM112 methyltransferase complex, that specifically mediates the S-adenosyl-L-methionine-dependent N(2)-methylation of guanosine nucleotide at position 6 (m2G6) in tRNAs. This is one of the major tRNA (guanine-N(2))-methyltransferases. Also catalyzes the S-adenosyl-L-methionine-dependent N(2)-methylation of guanosine nucleotide at position 7 of tRNA(Trp). The chain is tRNA (guanine(6)-N(2))-methyltransferase THUMP3 from Bos taurus (Bovine).